The primary structure comprises 94 residues: Protein translocase subunit SecE (94 aa).

The tract at residues 1 to 32 (MTDAVGSIDTPDAQDEVPESKKTRKGGKRAKK) is disordered. Basic residues predominate over residues 22-32 (KTRKGGKRAKK). Residues 59 to 81 (QLTSYTTVVIFFVAIMIRLVTVI) traverse the membrane as a helical segment.

This sequence belongs to the SecE/SEC61-gamma family. Component of the Sec protein translocase complex. Heterotrimer consisting of SecY, SecE and SecG subunits. The heterotrimers can form oligomers, although 1 heterotrimer is thought to be able to translocate proteins. Interacts with the ribosome. Interacts with SecDF, and other proteins may be involved. Interacts with SecA.

It is found in the cell membrane. Its function is as follows. Essential subunit of the Sec protein translocation channel SecYEG. Clamps together the 2 halves of SecY. May contact the channel plug during translocation. The polypeptide is Protein translocase subunit SecE (Streptomyces galbus).